Reading from the N-terminus, the 396-residue chain is GTPase Obg (396 aa).

The Obg domain maps to 1 to 159 (MKFVDEASIY…RTLKLEMKVL (159 aa)). The tract at residues 120-146 (GGHHGLGNTRFKSSTNRAPRQTTKGTV) is disordered. Positions 129 to 144 (RFKSSTNRAPRQTTKG) are enriched in polar residues. In terms of domain architecture, OBG-type G spans 160 to 333 (ADVGLLGLPN…LCLDLMTALD (174 aa)). Residues 166-173 (GLPNAGKS), 191-195 (FTTLV), 213-216 (DIPG), 283-286 (NKTD), and 314-316 (SAI) contribute to the GTP site. Residues S173 and T193 each coordinate Mg(2+).

It belongs to the TRAFAC class OBG-HflX-like GTPase superfamily. OBG GTPase family. As to quaternary structure, monomer. Mg(2+) serves as cofactor.

It localises to the cytoplasm. An essential GTPase which binds GTP, GDP and possibly (p)ppGpp with moderate affinity, with high nucleotide exchange rates and a fairly low GTP hydrolysis rate. Plays a role in control of the cell cycle, stress response, ribosome biogenesis and in those bacteria that undergo differentiation, in morphogenesis control. This chain is GTPase Obg, found in Marinomonas sp. (strain MWYL1).